The following is a 685-amino-acid chain: Bifunctional lycopene cyclase/phytoene synthase (685 aa).

The interval Thr-15 to Arg-255 is lycopene beta-cyclase. The next 7 membrane-spanning stretches (helical) occupy residues Phe-21–Leu-41, Lys-48–Val-68, Tyr-92–Leu-114, Leu-129–Val-149, Tyr-156–Val-176, Gly-187–Val-207, and Leu-231–Phe-251. Residues Gln-262–Val-685 form a phytoene synthase region.

In the N-terminal section; belongs to the lycopene beta-cyclase family. It in the C-terminal section; belongs to the phytoene/squalene synthase family.

The protein localises to the membrane. The enzyme catalyses all-trans-lycopene = gamma-carotene. It carries out the reaction gamma-carotene = all-trans-beta-carotene. The catalysed reaction is 2 (2E,6E,10E)-geranylgeranyl diphosphate = 15-cis-phytoene + 2 diphosphate. The protein operates within carotenoid biosynthesis; beta-carotene biosynthesis. It participates in carotenoid biosynthesis; phytoene biosynthesis; all-trans-phytoene from geranylgeranyl diphosphate: step 1/1. Its function is as follows. Bifunctional enzyme that catalyzes the reactions from geranylgeranyl diphosphate to phytoene (phytoene synthase) and lycopene to beta-carotene via the intermediate gamma-carotene (lycopene cyclase). The chain is Bifunctional lycopene cyclase/phytoene synthase from Sporisorium reilianum (strain SRZ2) (Maize head smut fungus).